The primary structure comprises 594 residues: MIPAVTDDDPLEDPLDDDVAPGLDDAEPEPEPRDEHDEPSRPATGSRIGGWVARRGSRFGKGVLDRCAPLSAAIGGGLALWLSFPPIGWWFTAFPGLALLGWVLTRTATTKAGGFGYGVLFGLAFYVPLLPWISGLVGAVPWLALAFAESLFCGLFGLGAVVVVRLPGWPLWFATLWVAAEWAKSTFPFGGFPWGASSYGQTNGPLLALARIGGAPLVSFAVALIGFSLTLLTAQIVWWWRHGHKPGVPAPAVMLPGVAIAASLLVTALVWPQVRQSGTGAGDDTAVTVAAVQGNVPRLGLEFNAQRRAVLDNHVKETLRLADDVKAGRAAQPMFVIWPENSSDIDPLLNADASAQITTAAEAIDAPILVGGVVRADGYTPDNPVANNTVIVWEPTDGPGERHDKQIVQPFGEYLPWRGFFKHLSSYADRAGYFVPGTGTGVVHAAGVPIGITTCWEVIFDRAARESVLNGAQVLAVPSNNATFDEAMSAQQLAFGKLRAVEHDRYVVVAGTTGISAVIAPDGHEISRTEWFQPAYLDNQIRLKTDLTPATKWGPIVQAVLVIAGVAVLLIAILHNGRFAPRMLRRRSATTVKR.

Residues 1 to 29 (MIPAVTDDDPLEDPLDDDVAPGLDDAEPE) are compositionally biased toward acidic residues. The disordered stretch occupies residues 1–48 (MIPAVTDDDPLEDPLDDDVAPGLDDAEPEPEPRDEHDEPSRPATGSRI). The Cytoplasmic portion of the chain corresponds to 1–67 (MIPAVTDDDP…RFGKGVLDRC (67 aa)). Basic and acidic residues predominate over residues 30–40 (PEPRDEHDEPS). Residues 68-87 (APLSAAIGGGLALWLSFPPI) traverse the membrane as a helical segment. The Extracellular portion of the chain corresponds to 88 to 116 (GWWFTAFPGLALLGWVLTRTATTKAGGFG). The chain crosses the membrane as a helical span at residues 117-134 (YGVLFGLAFYVPLLPWIS). Residues 135–138 (GLVG) are Cytoplasmic-facing. Residues 139-160 (AVPWLALAFAESLFCGLFGLGA) traverse the membrane as a helical segment. Over 161–221 (VVVVRLPGWP…IGGAPLVSFA (61 aa)) the chain is Extracellular. Residues 222-239 (VALIGFSLTLLTAQIVWW) form a helical membrane-spanning segment. Residues 240 to 251 (WRHGHKPGVPAP) are Cytoplasmic-facing. A helical membrane pass occupies residues 252–269 (AVMLPGVAIAASLLVTAL). Topologically, residues 270–554 (VWPQVRQSGT…TDLTPATKWG (285 aa)) are extracellular. The region spanning 287–543 (VTVAAVQGNV…PAYLDNQIRL (257 aa)) is the CN hydrolase domain. Glutamate 340 functions as the Proton acceptor in the catalytic mechanism. Lysine 405 is an active-site residue. Cysteine 455 serves as the catalytic Nucleophile. A helical membrane pass occupies residues 555–572 (PIVQAVLVIAGVAVLLIA). Residues 573–594 (ILHNGRFAPRMLRRRSATTVKR) are Cytoplasmic-facing.

The protein belongs to the CN hydrolase family. Apolipoprotein N-acyltransferase subfamily. Interacts with Ppm1 (AC A0QZ12) upon coexpression in E.coli, which increases the PPM synthase activity of Ppm1.

The protein resides in the cell membrane. It catalyses the reaction N-terminal S-1,2-diacyl-sn-glyceryl-L-cysteinyl-[lipoprotein] + a glycerophospholipid = N-acyl-S-1,2-diacyl-sn-glyceryl-L-cysteinyl-[lipoprotein] + a 2-acyl-sn-glycero-3-phospholipid + H(+). The protein operates within protein modification; lipoprotein biosynthesis (N-acyl transfer). Its function is as follows. Catalyzes the phospholipid dependent N-acylation of the N-terminal cysteine of apolipoprotein, the last step in lipoprotein maturation. Can transfer a number of fatty acids (C16 and C19, palmitic and probably tuberculostearic acids respectively are shown). Enhances the polyprenol monophosphomannose (PPM) synthase activity of Ppm1 (AC A0QZ12) without itself having PPM synthase catalytic activity. The sequence is that of Apolipoprotein N-acyltransferase from Mycolicibacterium smegmatis (strain ATCC 700084 / mc(2)155) (Mycobacterium smegmatis).